A 157-amino-acid chain; its full sequence is MPKGEGKVVSQNKKANHDYFIEETYETGIVLQGTEIKSIRAGRVNLKDAFAKIERGEVFLHNMHISPYEQGNRYNHDPLRTRKLLMHRKQINKLIGLTKEQGYSLVPLKIYLKNGFAKVLLGLGKGKKKFDKREDLKRKDAKREIERAFRDRQKGLI.

This sequence belongs to the SmpB family.

Its subcellular location is the cytoplasm. Required for rescue of stalled ribosomes mediated by trans-translation. Binds to transfer-messenger RNA (tmRNA), required for stable association of tmRNA with ribosomes. tmRNA and SmpB together mimic tRNA shape, replacing the anticodon stem-loop with SmpB. tmRNA is encoded by the ssrA gene; the 2 termini fold to resemble tRNA(Ala) and it encodes a 'tag peptide', a short internal open reading frame. During trans-translation Ala-aminoacylated tmRNA acts like a tRNA, entering the A-site of stalled ribosomes, displacing the stalled mRNA. The ribosome then switches to translate the ORF on the tmRNA; the nascent peptide is terminated with the 'tag peptide' encoded by the tmRNA and targeted for degradation. The ribosome is freed to recommence translation, which seems to be the essential function of trans-translation. In Bacillus licheniformis (strain ATCC 14580 / DSM 13 / JCM 2505 / CCUG 7422 / NBRC 12200 / NCIMB 9375 / NCTC 10341 / NRRL NRS-1264 / Gibson 46), this protein is SsrA-binding protein.